A 130-amino-acid polypeptide reads, in one-letter code: Small ribosomal subunit protein uS8 (130 aa).

Belongs to the universal ribosomal protein uS8 family. As to quaternary structure, part of the 30S ribosomal subunit. Contacts proteins S5 and S12.

One of the primary rRNA binding proteins, it binds directly to 16S rRNA central domain where it helps coordinate assembly of the platform of the 30S subunit. This chain is Small ribosomal subunit protein uS8, found in Buchnera aphidicola subsp. Schizaphis graminum (strain Sg).